The sequence spans 67 residues: Small ribosomal subunit protein bS21 (67 aa).

This sequence belongs to the bacterial ribosomal protein bS21 family.

This chain is Small ribosomal subunit protein bS21, found in Hydrogenobaculum sp. (strain Y04AAS1).